The sequence spans 851 residues: UPF0182 protein CYA_1810 (851 aa).

The next 7 membrane-spanning stretches (helical) occupy residues 7-27 (GLVL…LASF), 47-67 (VLAR…VVGS), 76-96 (ASTA…AWSL), 141-161 (FNLV…ELGL), 168-188 (LALS…LFLL), 220-240 (LPAT…FWAL), and 259-279 (WASS…FGLL).

Belongs to the UPF0182 family.

The protein localises to the cell membrane. The chain is UPF0182 protein CYA_1810 from Synechococcus sp. (strain JA-3-3Ab) (Cyanobacteria bacterium Yellowstone A-Prime).